The sequence spans 235 residues: Adapter protein MecA (235 aa).

Residues 113 to 135 (LRQSDKGDIVKSKVSSSDHKDGS) show a composition bias toward basic and acidic residues. The segment at 113–136 (LRQSDKGDIVKSKVSSSDHKDGSQ) is disordered.

Belongs to the MecA family. Homodimer.

Functionally, enables the recognition and targeting of unfolded and aggregated proteins to the ClpC protease or to other proteins involved in proteolysis. The chain is Adapter protein MecA from Leuconostoc mesenteroides subsp. mesenteroides (strain ATCC 8293 / DSM 20343 / BCRC 11652 / CCM 1803 / JCM 6124 / NCDO 523 / NBRC 100496 / NCIMB 8023 / NCTC 12954 / NRRL B-1118 / 37Y).